The following is a 567-amino-acid chain: PEX5-related protein (567 aa).

Residues 56–105 are disordered; the sequence is SEPVSQPQTKAKKSEPSSKSSSLKKKADGSDLISADAEQRAQALRGPETS. Phosphoserine is present on serine 146. Residues 150–169 form a disordered region; that stretch reads LWSAEHRSQPELSTGKSALN. Residues serine 194, serine 198, and serine 202 each carry the phosphoserine modification. TPR repeat units follow at residues 267 to 300, 301 to 334, and 336 to 368; these read WPGAFEEGLKRLKEGDLPVTILFMEAAILQDPGD, AEAWQFLGITQAENENEQAAIVALQRCLELQPNN, and KALMALAVSYTNTSHQQDACEALKNWIKQNPKY. 2 positions are modified to phosphoserine: serine 386 and serine 388. TPR repeat units lie at residues 415–448, 450–482, and 484–516; these read PDLQTGLGVLFHLSGEFNRAIDAFNAALTVRPED, SLWNRLGATLANGDRSEEAVEAYTRALEIQPGF, and RSRYNLGISCINLGAYREAVSNFLTALSLQRKS.

This sequence belongs to the peroxisomal targeting signal receptor family. As to quaternary structure, interacts with RAB8B. Forms an obligate 4:4 complex with HCN2. Interacts with HCN3. Interacts with HCN4 with a 4:4 HCN4:PEX5L stoichiometry; reduces the effects of cAMP on the voltage-dependence and rate of activation of HCN4.

It localises to the cytoplasm. The protein localises to the membrane. Accessory subunit of hyperpolarization-activated cyclic nucleotide-gated (HCN) channels, regulating their cell-surface expression and cyclic nucleotide dependence. This Mus musculus (Mouse) protein is PEX5-related protein (Pex5l).